The sequence spans 208 residues: GTP cyclohydrolase-2 (208 aa).

49-53 is a GTP binding site; it reads RLHSE. Zn(2+) is bound by residues Cys-54, Cys-65, and Cys-67. GTP contacts are provided by residues Gln-70, 92–94, and Thr-114; that span reads EGR. The Proton acceptor role is filled by Asp-126. The active-site Nucleophile is the Arg-128. Residues Thr-149 and Lys-154 each coordinate GTP.

This sequence belongs to the GTP cyclohydrolase II family. Requires Zn(2+) as cofactor.

It catalyses the reaction GTP + 4 H2O = 2,5-diamino-6-hydroxy-4-(5-phosphoribosylamino)-pyrimidine + formate + 2 phosphate + 3 H(+). Its pathway is cofactor biosynthesis; riboflavin biosynthesis; 5-amino-6-(D-ribitylamino)uracil from GTP: step 1/4. Catalyzes the conversion of GTP to 2,5-diamino-6-ribosylamino-4(3H)-pyrimidinone 5'-phosphate (DARP), formate and pyrophosphate. This Azotobacter vinelandii (strain DJ / ATCC BAA-1303) protein is GTP cyclohydrolase-2.